Consider the following 351-residue polypeptide: UDP-3-O-acylglucosamine N-acyltransferase 1 (351 aa).

The active-site Proton acceptor is the histidine 237.

It belongs to the transferase hexapeptide repeat family. LpxD subfamily. Homotrimer.

The catalysed reaction is a UDP-3-O-[(3R)-3-hydroxyacyl]-alpha-D-glucosamine + a (3R)-hydroxyacyl-[ACP] = a UDP-2-N,3-O-bis[(3R)-3-hydroxyacyl]-alpha-D-glucosamine + holo-[ACP] + H(+). Its pathway is bacterial outer membrane biogenesis; LPS lipid A biosynthesis. Catalyzes the N-acylation of UDP-3-O-acylglucosamine using 3-hydroxyacyl-ACP as the acyl donor. Is involved in the biosynthesis of lipid A, a phosphorylated glycolipid that anchors the lipopolysaccharide to the outer membrane of the cell. This chain is UDP-3-O-acylglucosamine N-acyltransferase 1, found in Legionella pneumophila (strain Paris).